Consider the following 550-residue polypeptide: Dihydroxy-acid dehydratase (550 aa).

D78 is a binding site for Mg(2+). C119 serves as a coordination point for [2Fe-2S] cluster. Mg(2+) contacts are provided by D120 and K121. K121 carries the post-translational modification N6-carboxylysine. Position 191 (C191) interacts with [2Fe-2S] cluster. E440 lines the Mg(2+) pocket. Residue S466 is the Proton acceptor of the active site.

Belongs to the IlvD/Edd family. In terms of assembly, homodimer. Requires [2Fe-2S] cluster as cofactor. Mg(2+) serves as cofactor.

The catalysed reaction is (2R)-2,3-dihydroxy-3-methylbutanoate = 3-methyl-2-oxobutanoate + H2O. The enzyme catalyses (2R,3R)-2,3-dihydroxy-3-methylpentanoate = (S)-3-methyl-2-oxopentanoate + H2O. The protein operates within amino-acid biosynthesis; L-isoleucine biosynthesis; L-isoleucine from 2-oxobutanoate: step 3/4. Its pathway is amino-acid biosynthesis; L-valine biosynthesis; L-valine from pyruvate: step 3/4. In terms of biological role, functions in the biosynthesis of branched-chain amino acids. Catalyzes the dehydration of (2R,3R)-2,3-dihydroxy-3-methylpentanoate (2,3-dihydroxy-3-methylvalerate) into 2-oxo-3-methylpentanoate (2-oxo-3-methylvalerate) and of (2R)-2,3-dihydroxy-3-methylbutanoate (2,3-dihydroxyisovalerate) into 2-oxo-3-methylbutanoate (2-oxoisovalerate), the penultimate precursor to L-isoleucine and L-valine, respectively. This Methanococcus aeolicus (strain ATCC BAA-1280 / DSM 17508 / OCM 812 / Nankai-3) protein is Dihydroxy-acid dehydratase.